A 202-amino-acid chain; its full sequence is UDP-N-acetylglucosamine transferase subunit ALG13 (202 aa).

The protein belongs to the glycosyltransferase 28 family. Heterodimer with ALG14 to form a functional enzyme.

Its subcellular location is the endoplasmic reticulum. The catalysed reaction is an N-acetyl-alpha-D-glucosaminyl-diphospho-di-trans,poly-cis-dolichol + UDP-N-acetyl-alpha-D-glucosamine = an N,N'-diacetylchitobiosyl-diphospho-di-trans,poly-cis-dolichol + UDP + H(+). In terms of biological role, involved in protein N-glycosylation. Essential for the second step of the dolichol-linked oligosaccharide pathway. This is UDP-N-acetylglucosamine transferase subunit ALG13 (ALG13) from Saccharomyces cerevisiae (strain ATCC 204508 / S288c) (Baker's yeast).